We begin with the raw amino-acid sequence, 126 residues long: Small ribosomal subunit protein uS13 (126 aa).

The disordered stretch occupies residues 94–126 (RGLPVHGQRTSTNARTRKGPRRAIAGKKKPGKK). Residues 108-126 (RTRKGPRRAIAGKKKPGKK) are compositionally biased toward basic residues.

This sequence belongs to the universal ribosomal protein uS13 family. As to quaternary structure, part of the 30S ribosomal subunit. Forms a loose heterodimer with protein S19. Forms two bridges to the 50S subunit in the 70S ribosome.

Its function is as follows. Located at the top of the head of the 30S subunit, it contacts several helices of the 16S rRNA. In the 70S ribosome it contacts the 23S rRNA (bridge B1a) and protein L5 of the 50S subunit (bridge B1b), connecting the 2 subunits; these bridges are implicated in subunit movement. Contacts the tRNAs in the A and P-sites. The chain is Small ribosomal subunit protein uS13 from Streptomyces griseus subsp. griseus (strain JCM 4626 / CBS 651.72 / NBRC 13350 / KCC S-0626 / ISP 5235).